Here is a 664-residue protein sequence, read N- to C-terminus: UV-stimulated scaffold protein A homolog (664 aa).

Residues 10-153 (KVIGLIEKAT…LKNTLKLKFP (144 aa)) are VHS-like. The stretch at 148–180 (LKLKFPDLQANAARIQRERQEREMKTKEILRNK) forms a coiled coil. Disordered stretches follow at residues 330–350 (HGNEETNEEEEDIWEEDDGKV) and 362–403 (MRTQ…GNSL). Residues 334 to 347 (ETNEEEEDIWEEDD) are compositionally biased toward acidic residues. A compositionally biased stretch (polar residues) spans 363-374 (RTQQSENSSLPS). A compositionally biased stretch (basic and acidic residues) spans 377 to 387 (EAKKSTSEARS). Polar residues predominate over residues 388 to 402 (NKVSNTKKVGSSGNS). Residues 473–500 (TPPCRASLKKGGLCQRRDLRVCPFHGPI) form a UVSSA-type zinc finger. Positions 476, 486, 494, and 497 each coordinate Zn(2+). 2 disordered regions span residues 514 to 546 (SPLDESENQTSSTSGTNQDVSMDETTSDSDPNQ) and 640 to 664 (VKGTNPQQLAQGNDEKCRDTSANQW). Polar residues-rich tracts occupy residues 521–533 (NQTSSTSGTNQDV) and 640–650 (VKGTNPQQLAQ).

Belongs to the UVSSA family.

It localises to the chromosome. This chain is UV-stimulated scaffold protein A homolog, found in Arabidopsis thaliana (Mouse-ear cress).